We begin with the raw amino-acid sequence, 548 residues long: Non-structural protein NS1 (548 aa).

It belongs to the orbivirus non-structural protein NS1 family.

In African horse sickness virus (AHSV), this protein is Non-structural protein NS1 (Segment-5).